The following is a 449-amino-acid chain: Tubulin alpha chain (449 aa).

The MREC motif motif lies at 1 to 4; it reads MREC. Glutamine 11 is a GTP binding site. The residue at position 40 (lysine 40) is an N6-acetyllysine. Residues glutamate 71, serine 140, glycine 144, threonine 145, threonine 179, asparagine 206, and asparagine 228 each contribute to the GTP site. Residue glutamate 71 participates in Mg(2+) binding. Glutamate 254 is a catalytic residue. Position 443 is a 5-glutamyl polyglutamate (glutamate 443).

This sequence belongs to the tubulin family. In terms of assembly, dimer of alpha and beta chains. A typical microtubule is a hollow water-filled tube with an outer diameter of 25 nm and an inner diameter of 15 nM. Alpha-beta heterodimers associate head-to-tail to form protofilaments running lengthwise along the microtubule wall with the beta-tubulin subunit facing the microtubule plus end conferring a structural polarity. Microtubules usually have 13 protofilaments but different protofilament numbers can be found in some organisms and specialized cells. The cofactor is Mg(2+). Some glutamate residues at the C-terminus are polyglycylated, resulting in polyglycine chains on the gamma-carboxyl group. Glycylation is mainly limited to tubulin incorporated into axonemes (cilia and flagella) whereas glutamylation is prevalent in neuronal cells, centrioles, axonemes, and the mitotic spindle. Both modifications can coexist on the same protein on adjacent residues, and lowering polyglycylation levels increases polyglutamylation, and reciprocally. The precise function of polyglycylation is still unclear. In terms of processing, some glutamate residues at the C-terminus are polyglutamylated, resulting in polyglutamate chains on the gamma-carboxyl group. Polyglutamylation plays a key role in microtubule severing by spastin (SPAST). SPAST preferentially recognizes and acts on microtubules decorated with short polyglutamate tails: severing activity by SPAST increases as the number of glutamates per tubulin rises from one to eight, but decreases beyond this glutamylation threshold. Post-translationally, acetylation of alpha chains at Lys-40 is located inside the microtubule lumen. This modification has been correlated with increased microtubule stability, intracellular transport and ciliary assembly. Undergoes a tyrosination/detyrosination cycle, the cyclic removal and re-addition of a C-terminal tyrosine residue by the enzymes tubulin tyrosine carboxypeptidase (MATCAP1, VASH1 or VASH2) and tubulin tyrosine ligase (TTL), respectively. In terms of processing, tyrosination promotes microtubule interaction with CAP-Gly microtubule plus-end tracking proteins. Tyrosinated tubulins regulate the initiation of dynein-driven motility. Post-translationally, detyrosination is involved in metaphase plate congression by guiding chromosomes during mitosis. Detyrosination increases microtubules-dependent mechanotransduction in dystrophic cardiac and skeletal muscle. In cardiomyocytes, detyrosinated microtubules are required to resist to contractile compression during contraction.

The protein localises to the cytoplasm. Its subcellular location is the cytoskeleton. The enzyme catalyses GTP + H2O = GDP + phosphate + H(+). Functionally, tubulin is the major constituent of microtubules, a cylinder consisting of laterally associated linear protofilaments composed of alpha- and beta-tubulin heterodimers. Microtubules grow by the addition of GTP-tubulin dimers to the microtubule end, where a stabilizing cap forms. Below the cap, tubulin dimers are in GDP-bound state, owing to GTPase activity of alpha-tubulin. The protein is Tubulin alpha chain (tuba) of Xenopus tropicalis (Western clawed frog).